A 338-amino-acid polypeptide reads, in one-letter code: Peptidoglycan deacetylase-like protein FGM2 (338 aa).

Asp49, His124, and His128 together coordinate Zn(2+). A NodB homology domain is found at 65–257; sequence LSDYSAGIFA…VTNSHGFVSS (193 aa).

The protein belongs to the polysaccharide deacetylase family.

Its function is as follows. Peptidoglycan deacetylase-like protein; part of the Fg3_54/C64 gene cluster that mediates the biosynthesis of the octapeptide fusaoctaxin A, a virulence factor that is required for cell-to-cell invasiveness of plant host. The 2 nonribosomal peptide synthetases NRPS9 and NRPS5 form an assembly line which likely utilizes GABA as a starter unit (loaded on the unique module M1 of NRPS9) and sequentially incorporates seven extender units composed of the residues L-Ala, L-allo-Ile, L-Ser, L-Val, L-Ser, L-Leu and L-Leu, respectively. During the process, each of the residues that are tethered on modules M3-M7 of NRPS5 containing an E domain can undergo an epimerization reaction to produce a D-configuration before the transpeptidation reaction occurs. The elongation of the peptidyl chain might be terminated by module M8-mediated L-Leu incorporation, followed by R domain-catalyzed 4 electron reduction to release the resulting octapeptide from the assembly line as an alcohol. Fusaoctaxin A is cleaved by the cluster specific ABC transporter FGM5 to the pentapeptide fusapentaxin A and the tripeptide fusatrixin A. The other enzymes from the cluster, FGM1, FGM2, FGM3 and FGM9 seem not to be involved in the biosynthesis of fusaoctaxin A and their functions have still to be determined. This Gibberella zeae (strain ATCC MYA-4620 / CBS 123657 / FGSC 9075 / NRRL 31084 / PH-1) (Wheat head blight fungus) protein is Peptidoglycan deacetylase-like protein FGM2.